Consider the following 738-residue polypeptide: DNA ligase (738 aa).

NAD(+)-binding positions include 48 to 52 (DVVYD), 97 to 98 (SL), and glutamate 136. The active-site N6-AMP-lysine intermediate is the lysine 138. NAD(+) contacts are provided by arginine 159, glutamate 196, lysine 356, and lysine 380. Residues cysteine 474, cysteine 477, cysteine 492, and cysteine 497 each contribute to the Zn(2+) site. One can recognise a BRCT domain in the interval 659-738 (QLPQPLAGKT…SQLLELLEET (80 aa)).

It belongs to the NAD-dependent DNA ligase family. LigA subfamily. Requires Mg(2+) as cofactor. Mn(2+) serves as cofactor.

It catalyses the reaction NAD(+) + (deoxyribonucleotide)n-3'-hydroxyl + 5'-phospho-(deoxyribonucleotide)m = (deoxyribonucleotide)n+m + AMP + beta-nicotinamide D-nucleotide.. Its function is as follows. DNA ligase that catalyzes the formation of phosphodiester linkages between 5'-phosphoryl and 3'-hydroxyl groups in double-stranded DNA using NAD as a coenzyme and as the energy source for the reaction. It is essential for DNA replication and repair of damaged DNA. The protein is DNA ligase of Cyanothece sp. (strain PCC 7425 / ATCC 29141).